The primary structure comprises 189 residues: Peptidyl-tRNA hydrolase (189 aa).

Residue phenylalanine 15 participates in tRNA binding. The Proton acceptor role is filled by histidine 20. Tyrosine 65, asparagine 67, and asparagine 113 together coordinate tRNA.

This sequence belongs to the PTH family. As to quaternary structure, monomer.

It is found in the cytoplasm. It catalyses the reaction an N-acyl-L-alpha-aminoacyl-tRNA + H2O = an N-acyl-L-amino acid + a tRNA + H(+). Its function is as follows. Hydrolyzes ribosome-free peptidyl-tRNAs (with 1 or more amino acids incorporated), which drop off the ribosome during protein synthesis, or as a result of ribosome stalling. Functionally, catalyzes the release of premature peptidyl moieties from peptidyl-tRNA molecules trapped in stalled 50S ribosomal subunits, and thus maintains levels of free tRNAs and 50S ribosomes. The polypeptide is Peptidyl-tRNA hydrolase (Phytoplasma australiense).